Here is a 162-residue protein sequence, read N- to C-terminus: MLEDLRANSWSLRPCCMVLAYRVAHFCSVWRKKNVLNNLWAAPLLVLYRIITECFFGYEIQAAATIGRRFTIHHGYAVVINKNVVAGDDFTIRHGVTIGNRGADNMACPHIGNGVELGANVIILGDITLGNNVTVGAGSVVLDSVPDNALVVGEKARVKVIK.

This sequence belongs to the transferase hexapeptide repeat family.

It participates in slime biogenesis; slime polysaccharide biosynthesis. The protein is Putative colanic acid biosynthesis acetyltransferase WcaB (wcaB) of Escherichia coli O157:H7.